The chain runs to 176 residues: Inner membrane-spanning protein YciB (176 aa).

5 helical membrane-spanning segments follow: residues 23 to 43, 50 to 70, 74 to 94, 119 to 139, and 150 to 170; these read MIAATAVALVAGVVQAAFLYW, TMQWVGLVLIVVFGGATIVLG, FIMWKPSVLFWLGALFLWGSH, LTYMWVGFLIFMGIANWFVFT, and MFGSTALMLVFFIIQGIYLST.

It belongs to the YciB family.

It is found in the cell inner membrane. Its function is as follows. Plays a role in cell envelope biogenesis, maintenance of cell envelope integrity and membrane homeostasis. In Neisseria meningitidis serogroup A / serotype 4A (strain DSM 15465 / Z2491), this protein is Inner membrane-spanning protein YciB.